Here is a 208-residue protein sequence, read N- to C-terminus: Protein Nef (208 aa).

Residue Gly2 is the site of N-myristoyl glycine; by host attachment. Ser6 is subject to Phosphoserine; by host. Residues 64 to 67 form an acidic; interacts with host PACS1 and PACS2; stabilizes the interaction of NEF/MHC-I with host AP1M1; necessary for MHC-I internalization region; the sequence is EEEE. Positions 71-80 are SH3-binding; interaction with Src family tyrosine kinases; sequence PVKPQVPLRP. A PxxP; stabilizes the interaction of NEF/MHC-I with host AP1M1; necessary for MHC-I internalization motif is present at residues 74 to 77; the sequence is PQVP. The segment at 110–126 is mediates dimerization, Nef-PTE1 interaction; sequence DILDLWVYHTQGYFPDW. The segment at 150–182 is binding to ATP6V1H; that stretch reads VEPEKIEEANKGENNCLLHPMSQHGMDDPEREV. A Dileucine internalization motif; necessary for CD4 internalization motif is present at residues 166–167; the sequence is LL. The Diacidic; necessary for CD4 internalization signature appears at 176–177; sequence DD.

The protein belongs to the lentivirus primate group Nef protein family. As to quaternary structure, monomer; cytosolic form. Homodimer; membrane bound form. Interacts with Nef associated p21-activated kinase (PAK2); this interaction activates PAK2. Associates with the Nef-MHC-I-AP1 complex; this complex is required for MHC-I internalization. Interacts (via C-terminus) with host PI3-kinase. Interacts with host PACS1; this interaction seems to be weak. Interacts with host PACS2. Interacts with host LCK and MAPK3; these interactions inhibit the kinase activity of the latter. Interacts with host ATP6V1H; this interaction may play a role in CD4 endocytosis. Associates with the CD4-Nef-AP2 complex; this complex is required for CD4 internalization. Interacts with host AP2 subunit alpha and AP2 subunit sigma2. Interacts with TCR-zeta chain; this interaction up-regulates the Fas ligand (FasL) surface expression. Interacts with host HCK, LYN, and SRC; these interactions activate the Src family kinases. Interacts with MAP3K5; this interaction inhibits the Fas and TNFR-mediated death signals. Interacts with beta-COP and PTE1. Interacts with human RACK1; this increases Nef phosphorylation by PKC. Interacts with TP53; this interaction decreases the half-life of TP53, protecting the infected cell against p53-mediated apoptosis. Post-translationally, the virion-associated Nef proteins are cleaved by the viral protease to release the soluble C-terminal core protein. Nef is probably cleaved concomitantly with viral structural proteins on maturation of virus particles. In terms of processing, myristoylated. Phosphorylated on serine residues, probably by host PKCdelta and theta.

The protein localises to the host cell membrane. The protein resides in the virion. It localises to the secreted. Its subcellular location is the host Golgi apparatus membrane. In terms of biological role, factor of infectivity and pathogenicity, required for optimal virus replication. Alters numerous pathways of T-lymphocyte function and down-regulates immunity surface molecules in order to evade host defense and increase viral infectivity. Alters the functionality of other immunity cells, like dendritic cells, monocytes/macrophages and NK cells. Functionally, in infected CD4(+) T-lymphocytes, down-regulates the surface MHC-I, mature MHC-II, CD4, CD28, CCR5 and CXCR4 molecules. Mediates internalization and degradation of host CD4 through the interaction of with the cytoplasmic tail of CD4, the recruitment of AP-2 (clathrin adapter protein complex 2), internalization through clathrin coated pits, and subsequent transport to endosomes and lysosomes for degradation. Diverts host MHC-I molecules to the trans-Golgi network-associated endosomal compartments by an endocytic pathway to finally target them for degradation. MHC-I down-regulation may involve AP-1 (clathrin adapter protein complex 1) or possibly Src family kinase-ZAP70/Syk-PI3K cascade recruited by PACS2. In consequence infected cells are masked for immune recognition by cytotoxic T-lymphocytes. Decreasing the number of immune receptors also prevents reinfection by more HIV particles (superinfection). Down-regulates host SERINC3 and SERINC5 thereby excluding these proteins from the viral particles. Virion infectivity is drastically higher when SERINC3 or SERINC5 are excluded from the viral envelope, because these host antiviral proteins impair the membrane fusion event necessary for subsequent virion penetration. Its function is as follows. Bypasses host T-cell signaling by inducing a transcriptional program nearly identical to that of anti-CD3 cell activation. Interaction with TCR-zeta chain up-regulates the Fas ligand (FasL). Increasing surface FasL molecules and decreasing surface MHC-I molecules on infected CD4(+) cells send attacking cytotoxic CD8+ T-lymphocytes into apoptosis. Plays a role in optimizing the host cell environment for viral replication without causing cell death by apoptosis. Protects the infected cells from apoptosis in order to keep them alive until the next virus generation is ready to strike. Inhibits the Fas and TNFR-mediated death signals by blocking MAP3K5/ASK1. Decreases the half-life of TP53, protecting the infected cell against p53-mediated apoptosis. Inhibits the apoptotic signals regulated by the Bcl-2 family proteins through the formation of a Nef/PI3-kinase/PAK2 complex that leads to activation of PAK2 and induces phosphorylation of host BAD. In terms of biological role, extracellular Nef protein targets CD4(+) T-lymphocytes for apoptosis by interacting with CXCR4 surface receptors. The protein is Protein Nef of Human immunodeficiency virus type 1 group M subtype B (isolate MN) (HIV-1).